Here is a 295-residue protein sequence, read N- to C-terminus: Pyridoxal 5'-phosphate synthase subunit PdxS (295 aa).

Asp25 serves as a coordination point for D-ribose 5-phosphate. Residue Lys82 is the Schiff-base intermediate with D-ribose 5-phosphate of the active site. Position 154 (Gly154) interacts with D-ribose 5-phosphate. Arg166 serves as a coordination point for D-glyceraldehyde 3-phosphate. Residues Gly215 and Gly236–Ser237 each bind D-ribose 5-phosphate.

This sequence belongs to the PdxS/SNZ family. As to quaternary structure, in the presence of PdxT, forms a dodecamer of heterodimers.

The catalysed reaction is aldehydo-D-ribose 5-phosphate + D-glyceraldehyde 3-phosphate + L-glutamine = pyridoxal 5'-phosphate + L-glutamate + phosphate + 3 H2O + H(+). It participates in cofactor biosynthesis; pyridoxal 5'-phosphate biosynthesis. In terms of biological role, catalyzes the formation of pyridoxal 5'-phosphate from ribose 5-phosphate (RBP), glyceraldehyde 3-phosphate (G3P) and ammonia. The ammonia is provided by the PdxT subunit. Can also use ribulose 5-phosphate and dihydroxyacetone phosphate as substrates, resulting from enzyme-catalyzed isomerization of RBP and G3P, respectively. The chain is Pyridoxal 5'-phosphate synthase subunit PdxS from Bacillus cereus (strain 03BB102).